Here is a 757-residue protein sequence, read N- to C-terminus: Serine/threonine-protein phosphatase with EF-hands 2 (757 aa).

The IQ domain maps to 21–46 (KAAALIQRWYRRYMARLEMRRRCTWN). The tract at residues 128–544 (ATALVEAFRL…PHIVQYQANK (417 aa)) is catalytic. Mn(2+) contacts are provided by Asp-179, His-181, Asp-208, and Asn-240. The active-site Proton donor is the His-241. Position 292 (His-292) interacts with Mn(2+). The segment at 318-349 (CKTRKESENREEQKRKDNQTSSGQKPTPWFLP) is disordered. The span at 321 to 335 (RKESENREEQKRKDN) shows a compositional bias: basic and acidic residues. Residue His-492 coordinates Mn(2+). 3 EF-hand domains span residues 572–607 (AHSSDLLVEFRKRDPDESGVITLSDWATAVESVLHL), 656–691 (RNRSNLETIFRIIDSDHSGFISLDEFRQTWKLFSSH), and 696–731 (ITDDGICDLARSIDFNKDGHIDINEFLEAFRLVEQS). Residues Asp-585, Asp-587, Ser-589, Asp-596, Asp-669, Asp-671, Ser-673, Glu-680, Asp-709, Asn-711, Asp-713, His-715, and Glu-720 each coordinate Ca(2+).

This sequence belongs to the PPP phosphatase family. Requires Mn(2+) as cofactor. As to expression, detected in retina, more specifically in photoreceptors.

The enzyme catalyses O-phospho-L-seryl-[protein] + H2O = L-seryl-[protein] + phosphate. It catalyses the reaction O-phospho-L-threonyl-[protein] + H2O = L-threonyl-[protein] + phosphate. Its activity is regulated as follows. Activated by calcium. In terms of biological role, may play a role in phototransduction. May dephosphorylate photoactivated rhodopsin. May function as a calcium sensing regulator of ionic currents, energy production or synaptic transmission. The polypeptide is Serine/threonine-protein phosphatase with EF-hands 2 (Ppef2) (Mus musculus (Mouse)).